The following is a 153-amino-acid chain: Small ribosomal subunit protein uS13 (153 aa).

The tract at residues 129-153 is disordered; sequence RGQRTKSTFRHGSSVGVSRTRPTGN. Residues 143–153 show a composition bias toward polar residues; that stretch reads VGVSRTRPTGN.

Belongs to the universal ribosomal protein uS13 family. Part of the 30S ribosomal subunit. Forms a loose heterodimer with protein S19. Forms two bridges to the 50S subunit in the 70S ribosome.

In terms of biological role, located at the top of the head of the 30S subunit, it contacts several helices of the 16S rRNA. In the 70S ribosome it contacts the 23S rRNA (bridge B1a) and protein L5 of the 50S subunit (bridge B1b), connecting the 2 subunits; these bridges are implicated in subunit movement. The protein is Small ribosomal subunit protein uS13 of Methanosphaera stadtmanae (strain ATCC 43021 / DSM 3091 / JCM 11832 / MCB-3).